The following is a 1118-amino-acid chain: Protein SUPPRESSOR OF NPR1-1 CONSTITUTIVE 4 (1118 aa).

The N-terminal stretch at 1 to 35 (MNSQQSTRTKQMLQQSSTHLLCGVVLLQLFAAQVD) is a signal peptide. Topologically, residues 36–751 (AQRSTSPWQT…PLRNFLKVIR (716 aa)) are extracellular. The region spanning 51–353 (PLVIARGGFS…DFPLTASASV (303 aa)) is the GP-PDE 1 domain. Residues Asn-106, Asn-195, Asn-251, Asn-260, Asn-318, Asn-335, Asn-362, Asn-422, Asn-433, Asn-497, Asn-557, Asn-573, and Asn-656 are each glycosylated (N-linked (GlcNAc...) asparagine). The 302-residue stretch at 369–670 (FLVISKNGAS…EFPYTAARYK (302 aa)) folds into the GP-PDE 2 domain. A helical membrane pass occupies residues 752-772 (IVSWSVAGVVLFLVLLTLVFC). The Cytoplasmic segment spans residues 773-1118 (FHRKRETRLR…SEDVSVYTEG (346 aa)). Residues 805-1094 (KSFAEVVGRG…ALEVPPRPVL (290 aa)) enclose the Protein kinase domain. ATP-binding positions include 811–819 (VGRGGFGIV) and Lys-833. Asp-928 serves as the catalytic Proton acceptor.

This sequence in the N-terminal section; belongs to the glycerophosphoryl diester phosphodiesterase family. In the C-terminal section; belongs to the protein kinase superfamily. Ser/Thr protein kinase family. Expressed in shoots, rosette and cauline leaves, stems, flowers and siliques.

The protein resides in the cell membrane. The catalysed reaction is a sn-glycero-3-phosphodiester + H2O = an alcohol + sn-glycerol 3-phosphate + H(+). The enzyme catalyses L-seryl-[protein] + ATP = O-phospho-L-seryl-[protein] + ADP + H(+). It catalyses the reaction L-threonyl-[protein] + ATP = O-phospho-L-threonyl-[protein] + ADP + H(+). Atypical receptor-like kinase involved in disease resistance. This is Protein SUPPRESSOR OF NPR1-1 CONSTITUTIVE 4 from Arabidopsis thaliana (Mouse-ear cress).